The primary structure comprises 224 residues: UPF0758 protein CBUD_1789 (224 aa).

The MPN domain occupies 102–224; the sequence is QLGCTQDAQQ…SFSFAESGLL (123 aa). Zn(2+) is bound by residues H173, H175, and D186. The JAMM motif signature appears at 173 to 186; that stretch reads HNHPSGVPDPSQAD.

This sequence belongs to the UPF0758 family.

The sequence is that of UPF0758 protein CBUD_1789 from Coxiella burnetii (strain Dugway 5J108-111).